A 263-amino-acid chain; its full sequence is Tryptophan synthase alpha chain (263 aa).

Residues Glu49 and Asp60 each act as proton acceptor in the active site.

It belongs to the TrpA family. Tetramer of two alpha and two beta chains.

The enzyme catalyses (1S,2R)-1-C-(indol-3-yl)glycerol 3-phosphate + L-serine = D-glyceraldehyde 3-phosphate + L-tryptophan + H2O. The protein operates within amino-acid biosynthesis; L-tryptophan biosynthesis; L-tryptophan from chorismate: step 5/5. In terms of biological role, the alpha subunit is responsible for the aldol cleavage of indoleglycerol phosphate to indole and glyceraldehyde 3-phosphate. This is Tryptophan synthase alpha chain from Jannaschia sp. (strain CCS1).